The sequence spans 757 residues: 5-methyltetrahydropteroyltriglutamate--homocysteine methyltransferase (757 aa).

5-methyltetrahydropteroyltri-L-glutamate is bound by residues 16 to 19 and Lys112; that span reads RELK. Residues 433–435 and Glu486 contribute to the L-homocysteine site; that span reads IGS. Residues 433–435 and Glu486 each bind L-methionine; that span reads IGS. 5-methyltetrahydropteroyltri-L-glutamate is bound by residues 517-518 and Trp563; that span reads RC. Asp601 is a binding site for L-homocysteine. Asp601 is a binding site for L-methionine. Glu607 provides a ligand contact to 5-methyltetrahydropteroyltri-L-glutamate. Positions 643, 645, and 667 each coordinate Zn(2+). His696 acts as the Proton donor in catalysis. Cys728 contacts Zn(2+).

Belongs to the vitamin-B12 independent methionine synthase family. The cofactor is Zn(2+).

It carries out the reaction 5-methyltetrahydropteroyltri-L-glutamate + L-homocysteine = tetrahydropteroyltri-L-glutamate + L-methionine. The protein operates within amino-acid biosynthesis; L-methionine biosynthesis via de novo pathway; L-methionine from L-homocysteine (MetE route): step 1/1. Its function is as follows. Catalyzes the transfer of a methyl group from 5-methyltetrahydrofolate to homocysteine resulting in methionine formation. The chain is 5-methyltetrahydropteroyltriglutamate--homocysteine methyltransferase from Pasteurella multocida (strain Pm70).